The primary structure comprises 161 residues: Ribonuclease H (161 aa).

Residues 3 to 144 (VLKQLSIFTD…CDTLARVAAE (142 aa)) form the RNase H type-1 domain. Positions 12, 50, 72, and 136 each coordinate Mg(2+).

Belongs to the RNase H family. In terms of assembly, monomer. Mg(2+) is required as a cofactor.

It is found in the cytoplasm. It carries out the reaction Endonucleolytic cleavage to 5'-phosphomonoester.. Functionally, endonuclease that specifically degrades the RNA of RNA-DNA hybrids. This chain is Ribonuclease H, found in Shewanella woodyi (strain ATCC 51908 / MS32).